The chain runs to 160 residues: Cyclic pyranopterin monophosphate synthase (160 aa).

Residues 73–75 (LCH) and 110–111 (ME) each bind substrate. Residue Asp125 is part of the active site.

The protein belongs to the MoaC family. In terms of assembly, homohexamer; trimer of dimers.

It catalyses the reaction (8S)-3',8-cyclo-7,8-dihydroguanosine 5'-triphosphate = cyclic pyranopterin phosphate + diphosphate. The protein operates within cofactor biosynthesis; molybdopterin biosynthesis. Functionally, catalyzes the conversion of (8S)-3',8-cyclo-7,8-dihydroguanosine 5'-triphosphate to cyclic pyranopterin monophosphate (cPMP). This is Cyclic pyranopterin monophosphate synthase from Pseudomonas paraeruginosa (strain DSM 24068 / PA7) (Pseudomonas aeruginosa (strain PA7)).